A 600-amino-acid polypeptide reads, in one-letter code: Pyranose dehydrogenase (600 aa).

The signal sequence occupies residues 1–25; that stretch reads MFPRVVRLNSRLVSFALLGLQIANG. 2 N-linked (GlcNAc...) asparagine glycosylation sites follow: Asn99 and Asn114. His127 is modified (tele-8alpha-FAD histidine). N-linked (GlcNAc...) asparagine glycosylation is found at Asn199, Asn275, Asn342, Asn399, and Asn507. The active-site Proton acceptor is His535. Asn546 carries an N-linked (GlcNAc...) asparagine glycan. His579 is an active-site residue.

This sequence belongs to the GMC oxidoreductase family. As to quaternary structure, monomer. It depends on FAD as a cofactor. N-glycosylated.

The protein resides in the secreted. The enzyme catalyses pyranose + acceptor = pyranos-2-ulose + reduced acceptor.. It catalyses the reaction pyranose + acceptor = pyranos-3-ulose + reduced acceptor.. The catalysed reaction is pyranose + acceptor = pyranos-2,3-diulose + reduced acceptor.. It carries out the reaction a pyranoside + acceptor = a pyranosid-3-ulose + reduced acceptor.. The enzyme catalyses a pyranoside + acceptor = a pyranosid-3,4-diulose + reduced acceptor.. In terms of biological role, catalyzes the single-oxidation or sequential double oxidation reaction of carbohydrates primarily at carbon-2 and/or carbon-3 with the concomitant reduction of the flavin. The enzyme exhibits a broad sugar substrate specificity, oxidizing different aldopyranoses to the corresponding C-1, C-2, C-3 or C-1,2, C-2,3 and C-3,4 (di)dehydro sugars with substrate-specific regioselectivity. Accepts only a narrow range of electron acceptors such as substituted benzoquinones and complexed metal ions and reacts extremely slowly with O(2) as acceptor. May play a role in the natural recycling of plant matter by oxidizing all major monosaccharides in lignocellulose and by reducing quinone compounds or reactive radical species generated during lignin depolymerization. This chain is Pyranose dehydrogenase, found in Agaricus xanthodermus (Poison yellow meadow mushroom).